The following is a 662-amino-acid chain: UvrABC system protein B (662 aa).

Residues 25-182 (KGIEKREKFQ…KKLVEIQYER (158 aa)) form the Helicase ATP-binding domain. 38-45 (GVTGSGKT) is an ATP binding site. The Beta-hairpin motif lies at 91 to 114 (YYDYYQPEAYVAQSDTYIEKDASI). One can recognise a Helicase C-terminal domain in the interval 429-595 (QIDDLYTSIQ…TIIKDIREVI (167 aa)). The UVR domain maps to 622-657 (DKLIEKYEEEMKEAAQNLQFEKAAHLRDVIYKLKKD).

This sequence belongs to the UvrB family. As to quaternary structure, forms a heterotetramer with UvrA during the search for lesions. Interacts with UvrC in an incision complex.

It localises to the cytoplasm. Functionally, the UvrABC repair system catalyzes the recognition and processing of DNA lesions. A damage recognition complex composed of 2 UvrA and 2 UvrB subunits scans DNA for abnormalities. Upon binding of the UvrA(2)B(2) complex to a putative damaged site, the DNA wraps around one UvrB monomer. DNA wrap is dependent on ATP binding by UvrB and probably causes local melting of the DNA helix, facilitating insertion of UvrB beta-hairpin between the DNA strands. Then UvrB probes one DNA strand for the presence of a lesion. If a lesion is found the UvrA subunits dissociate and the UvrB-DNA preincision complex is formed. This complex is subsequently bound by UvrC and the second UvrB is released. If no lesion is found, the DNA wraps around the other UvrB subunit that will check the other stand for damage. The sequence is that of UvrABC system protein B from Clostridium botulinum (strain Langeland / NCTC 10281 / Type F).